Consider the following 3072-residue polypeptide: Eukaryotic translation initiation factor 2-alpha kinase PK4 (3072 aa).

Over 1–106 the chain is Cytoplasmic; it reads MCNFIKKGIR…EFRWLINKLE (106 aa). Residues 107 to 127 traverse the membrane as a helical segment; sequence IIYFYFFCHLLLLCIFQNIFL. Over 128 to 1643 the chain is Lumenal; it reads LTYMSKEYFL…FTSIRYKRRR (1516 aa). Residues 383-402 are disordered; the sequence is KEKCHRDEKCDRGENYDRGE. The segment at 576 to 610 is 10 X 7 AA tandem repeat of D-K-N-[GE]-L-D-[GD]; that stretch reads KKKILDENDMITIDNNIDKKENILFPYFHMEILKD. Residues 970 to 1010 are disordered; that stretch reads QYEDNNDNDNNKNDNNKNDNNKNDNNKNDNNNNNNNNNNNS. The span at 978–996 shows a compositional bias: basic and acidic residues; the sequence is DNNKNDNNKNDNNKNDNNK. The span at 997-1009 shows a compositional bias: low complexity; sequence NDNNNNNNNNNNN. A helical membrane pass occupies residues 1644 to 1664; it reads WYWRVFYTIMFIIFFPVLFIY. The Cytoplasmic portion of the chain corresponds to 1665–3072; the sequence is RRIIKRRKGS…IKNENNGADK (1408 aa). Disordered regions lie at residues 1737 to 1766 and 1917 to 1937; these read KNYN…SKSN and KVGS…KDKK. A compositionally biased stretch (low complexity) spans 1738-1766; it reads NYNNNNNNNNNKNNNNISNNNSNSNSKSN. Residues 1928-1937 are compositionally biased toward basic and acidic residues; it reads NYTDNEKDKK. Residues 2152 to 2160 and Lys2177 contribute to the ATP site; that span reads IGQGGFGSV. Disordered regions lie at residues 2316-2402, 2479-2558, and 2691-2749; these read FYSD…EGRD, RNED…KKLD, and ENDD…DDDI. The segment covering 2326–2335 has biased composition (basic and acidic residues); the sequence is KNKENPEKNH. The span at 2362–2384 shows a compositional bias: basic residues; that stretch reads HKLKKRKNKKKKSKKKRKSKSKI. Repeat copies occupy residues 2483–2489, 2490–2496, 2497–2503, 2504–2510, 2511–2517, 2518–2524, 2525–2531, 2532–2538, 2539–2545, and 2546–2552. The Protein kinase domain occupies 2627-2998; that stretch reads TNVESINTNG…KIKVLLDPHL (372 aa). A compositionally biased stretch (acidic residues) spans 2692-2702; that stretch reads NDDDDDDDDDN. The Proton acceptor role is filled by Asp2835. Thr2902 bears the Phosphothreonine mark.

This sequence belongs to the protein kinase superfamily. Ser/Thr protein kinase family. GCN2 subfamily. May form oligomers in response to stress; oligomerization may result in catalytic activity. Interacts with BIP; the interaction is disrupted in response to stress. Post-translationally, auto-phosphorylated.

The protein resides in the endoplasmic reticulum membrane. It catalyses the reaction L-seryl-[protein] + ATP = O-phospho-L-seryl-[protein] + ADP + H(+). The catalysed reaction is L-threonyl-[protein] + ATP = O-phospho-L-threonyl-[protein] + ADP + H(+). With respect to regulation, dissociation from BIP and oligomerization, may results autophosphorylation and kinase activity induction. Functionally, during the asexual blood stage, phosphorylates translation factor eIF2alpha in late schizonts resulting in protein translation inhibition. Plays a role in trophozoite differentiation into schizonts. The sequence is that of Eukaryotic translation initiation factor 2-alpha kinase PK4 from Plasmodium falciparum (isolate 3D7).